Reading from the N-terminus, the 418-residue chain is Trans-acting enoyl reductase (418 aa).

Belongs to the saccharopine dehydrogenase family. Enoyl reductase subfamily.

In terms of biological role, involved in the reduction of the double bond between C-4 and C-5 during phthiocerol dimycocerosates (DIM A) and glycosylated phenolphthiocerol dimycocerosates (PGL) biosynthesis. In Mycobacterium leprae (strain TN), this protein is Trans-acting enoyl reductase.